Consider the following 156-residue polypeptide: Small ribosomal subunit protein uS7 (156 aa).

It belongs to the universal ribosomal protein uS7 family. In terms of assembly, part of the 30S ribosomal subunit. Contacts proteins S9 and S11.

Its function is as follows. One of the primary rRNA binding proteins, it binds directly to 16S rRNA where it nucleates assembly of the head domain of the 30S subunit. Is located at the subunit interface close to the decoding center, probably blocks exit of the E-site tRNA. The chain is Small ribosomal subunit protein uS7 from Frankia alni (strain DSM 45986 / CECT 9034 / ACN14a).